A 270-amino-acid chain; its full sequence is Decarboxylase NovR (270 aa).

Belongs to the aldolase class II family.

It functions in the pathway antibiotic biosynthesis; novobiocin biosynthesis. In terms of biological role, may mediate the 2 consecutive oxidative decarboxylation steps in the biosynthesis of the prenylated hydroxybenzoic acid moiety of novobiocin, an aminocoumarin family antibiotic that targets bacterial DNA gyrases. This Streptomyces niveus (Streptomyces spheroides) protein is Decarboxylase NovR (novR).